We begin with the raw amino-acid sequence, 242 residues long: ATP synthase subunit a (242 aa).

The next 6 membrane-spanning stretches (helical) occupy residues 29–49 (SSIY…LAFY), 84–104 (FIPL…LGMT), 114–134 (IIVT…VGFV), 140–160 (FLTL…MIVI), 181–201 (MAGH…MIYL), and 203–223 (FLPI…AILQ).

This sequence belongs to the ATPase A chain family. As to quaternary structure, F-type ATPases have 2 components, CF(1) - the catalytic core - and CF(0) - the membrane proton channel. CF(1) has five subunits: alpha(3), beta(3), gamma(1), delta(1), epsilon(1). CF(0) has three main subunits: a(1), b(2) and c(9-12). The alpha and beta chains form an alternating ring which encloses part of the gamma chain. CF(1) is attached to CF(0) by a central stalk formed by the gamma and epsilon chains, while a peripheral stalk is formed by the delta and b chains.

It localises to the cell inner membrane. Functionally, key component of the proton channel; it plays a direct role in the translocation of protons across the membrane. This Rickettsia akari (strain Hartford) protein is ATP synthase subunit a.